Consider the following 461-residue polypeptide: Glutamyl-tRNA reductase (461 aa).

Substrate is bound by residues 50 to 53, Ser111, 116 to 118, and Gln122; these read TCNR and EPQ. Cys51 serves as the catalytic Nucleophile. Position 191-196 (191-196) interacts with NADP(+); it reads GAGEMA.

Belongs to the glutamyl-tRNA reductase family. Homodimer.

It catalyses the reaction (S)-4-amino-5-oxopentanoate + tRNA(Glu) + NADP(+) = L-glutamyl-tRNA(Glu) + NADPH + H(+). It participates in porphyrin-containing compound metabolism; protoporphyrin-IX biosynthesis; 5-aminolevulinate from L-glutamyl-tRNA(Glu): step 1/2. In terms of biological role, catalyzes the NADPH-dependent reduction of glutamyl-tRNA(Glu) to glutamate 1-semialdehyde (GSA). The polypeptide is Glutamyl-tRNA reductase (Syntrophobacter fumaroxidans (strain DSM 10017 / MPOB)).